Here is a 416-residue protein sequence, read N- to C-terminus: Alpha-1-antiproteinase (416 aa).

Residues 1–24 (MALSITRGLLLLAALCCLAPTSLA) form the signal peptide. 4 N-linked (GlcNAc...) asparagine glycosylation sites follow: Asn68, Asn105, Asn143, and Asn269. The segment at 371 to 390 (GATFLEAIPMSLPPDVEFNR) is RCL. Phosphoserine is present on Ser381.

Belongs to the serpin family. As to quaternary structure, interacts with CELA2A. Interacts with ERGIC3 and LMAN1/ERGIC53. Interacts with PRSS1/Trypsin. Plasma.

It is found in the secreted. In terms of biological role, inhibits human leukocyte elastase, pig pancreatic elastase and bovine trypsin on a 1:1 molar basis. The polypeptide is Alpha-1-antiproteinase (Ovis aries (Sheep)).